We begin with the raw amino-acid sequence, 125 residues long: Small ribosomal subunit protein uS12m (125 aa).

Positions 1 to 50 (MPSLNQLIRHGREEKRRTDRTRALDQCPQKQGVCPRVSTRTPKKPNSAPR) are disordered. The span at 10–23 (HGREEKRRTDRTRA) shows a compositional bias: basic and acidic residues.

This sequence belongs to the universal ribosomal protein uS12 family.

It is found in the mitochondrion. Functionally, protein S12 is involved in the translation initiation step. This Petunia hybrida (Petunia) protein is Small ribosomal subunit protein uS12m (RPS12).